Here is a 365-residue protein sequence, read N- to C-terminus: GDSL esterase/lipase At3g62280 (365 aa).

Positions Met-1 to Ser-25 are cleaved as a signal peptide. Ser-43 serves as the catalytic Nucleophile. 3 N-linked (GlcNAc...) asparagine glycosylation sites follow: Asn-137, Asn-178, and Asn-231. Catalysis depends on residues Asp-333 and His-336.

This sequence belongs to the 'GDSL' lipolytic enzyme family.

The protein localises to the secreted. This is GDSL esterase/lipase At3g62280 from Arabidopsis thaliana (Mouse-ear cress).